Here is a 239-residue protein sequence, read N- to C-terminus: Diablo IAP-binding mitochondrial protein (239 aa).

The N-terminal 22 residues, 1 to 22 (MAVLKSWLSRSVTLLFRYRQCL), are a transit peptide targeting the mitochondrion. The IAP-binding signature appears at 56–60 (AVPIA). The segment at 217-239 (RQKTQEEGEERAESEQEAYLRED) is disordered.

The protein belongs to the Smac/DIABLO protein family. Homodimer. Interacts with BEX3. Interacts with BIRC2/c-IAP1 (via BIR3 domain). Interacts with BIRC6/BRUCE. Interacts with BIRC7/livin. Interacts with XIAP/BIRC4 (via BIR3 domain). Interacts with the monomeric and dimeric form of BIRC5/survivin. Interacts with AREL1 (via HECT domain); in the cytoplasm following induction of apoptosis. Post-translationally, ubiquitinated by BIRC7/livin. Ubiquitinated by BIRC6. In terms of processing, the precursor form is proteolytically cleaved by mitochondrial processing peptidase MPP to remove the transit peptide and produce an intermediate form. This is then processed by PARL to produce the mature cleaved form which is released from mitochondria into the cytosol in apoptotic cells.

The protein localises to the mitochondrion. It is found in the cytoplasm. It localises to the cytosol. Promotes apoptosis by activating caspases in the cytochrome c/Apaf-1/caspase-9 pathway. Acts by opposing the inhibitory activity of inhibitor of apoptosis proteins (IAP). Inhibits the activity of BIRC6/BRUCE by inhibiting its binding to caspases. This chain is Diablo IAP-binding mitochondrial protein, found in Pongo abelii (Sumatran orangutan).